Here is a 100-residue protein sequence, read N- to C-terminus: Co-chaperonin GroES (100 aa).

The protein belongs to the GroES chaperonin family. In terms of assembly, heptamer of 7 subunits arranged in a ring. Interacts with the chaperonin GroEL.

It is found in the cytoplasm. Its function is as follows. Together with the chaperonin GroEL, plays an essential role in assisting protein folding. The GroEL-GroES system forms a nano-cage that allows encapsulation of the non-native substrate proteins and provides a physical environment optimized to promote and accelerate protein folding. GroES binds to the apical surface of the GroEL ring, thereby capping the opening of the GroEL channel. This Nocardia farcinica (strain IFM 10152) protein is Co-chaperonin GroES.